The sequence spans 445 residues: UPF0210 protein SEQ_0468 (445 aa).

Belongs to the UPF0210 family. Homodimer.

In Streptococcus equi subsp. equi (strain 4047), this protein is UPF0210 protein SEQ_0468.